A 321-amino-acid polypeptide reads, in one-letter code: Large ribosomal subunit protein uL3 (321 aa).

Belongs to the universal ribosomal protein uL3 family. In terms of assembly, part of the 50S ribosomal subunit. Forms a cluster with proteins L14 and L24e.

Its function is as follows. One of the primary rRNA binding proteins, it binds directly near the 3'-end of the 23S rRNA, where it nucleates assembly of the 50S subunit. This chain is Large ribosomal subunit protein uL3, found in Nanoarchaeum equitans (strain Kin4-M).